We begin with the raw amino-acid sequence, 132 residues long: MNILQQLEQEQVAKLTAGKTIPAFSPGDTVRVNVKVVEGTRERVQAYEGVVIARKNAGLNSSFTVRKISYGEGVERVFPLYSPRIDSVELVRKGDVRRAKLYYLRGRTGKSARIAERTTGHGITKKDTGSEG.

Belongs to the bacterial ribosomal protein bL19 family.

This protein is located at the 30S-50S ribosomal subunit interface and may play a role in the structure and function of the aminoacyl-tRNA binding site. The sequence is that of Large ribosomal subunit protein bL19 from Rhodospirillum centenum (strain ATCC 51521 / SW).